We begin with the raw amino-acid sequence, 107 residues long: U1-lycotoxin-Ls1q (107 aa).

A signal peptide spans 1–20 (MMKVLVVVALLVTLISYSSS). The propeptide occupies 21–41 (EGIDDLEADELLSLMANEQTR). Cystine bridges form between cysteine 44–cysteine 59, cysteine 51–cysteine 68, cysteine 58–cysteine 86, and cysteine 70–cysteine 84.

It belongs to the neurotoxin 19 (CSTX) family. 04 (U1-Lctx) subfamily. In terms of tissue distribution, expressed by the venom gland.

It localises to the secreted. The polypeptide is U1-lycotoxin-Ls1q (Lycosa singoriensis (Wolf spider)).